Consider the following 793-residue polypeptide: Toll-like receptor 6 (793 aa).

Positions 1–23 (MIKDKESPIRSCHFVYIVALVFG) are cleaved as a signal peptide. At 24-584 (TIIQFSDESE…FQVSELSCNT (561 aa)) the chain is on the extracellular side. 19 LRR repeats span residues 54–77 (TKVL…FLSG), 78–101 (LRVL…FNHD), 102–122 (LEYL…PITT), 123–147 (TLKH…GNLT), 148–168 (QLNF…LPIA), 169–196 (HLHL…ILNT), 197–219 (KKLH…SANS), 220–250 (LGCL…GGPT), 251–277 (LLNF…WPKP), 278–303 (IEYL…YKTT), 304–330 (LKAL…VFSE), 331–354 (MNIL…EPST), 355–378 (FKFL…TLAR), 379–404 (LETL…DMLS), 405–428 (LETL…SWVG), 429–449 (SIVV…RCLP), 450–473 (PRIK…TGLE), 474–495 (TLQE…GIFS), and 496–519 (SLSI…QSCQ). The N-linked (GlcNAc...) asparagine glycan is linked to asparagine 63. Cysteine 117 and cysteine 140 form a disulfide bridge. N-linked (GlcNAc...) asparagine glycosylation occurs at asparagine 145. Residues cysteine 235 and cysteine 265 are joined by a disulfide bond. N-linked (GlcNAc...) asparagine glycans are attached at residues asparagine 253 and asparagine 285. Cysteine 348 and cysteine 373 form a disulfide bridge. Asparagine 359 carries an N-linked (GlcNAc...) asparagine glycan. 2 N-linked (GlcNAc...) asparagine glycosylation sites follow: asparagine 423 and asparagine 434. Cysteine 424 and cysteine 447 are joined by a disulfide. Positions 520–575 (KIRSLKAGNNPFQCSCELRDFIQSVGQVSSDVVEGWPESYKCDYPESYKGTPLKDF) constitute an LRRCT domain. The chain crosses the membrane as a helical span at residues 585–605 (ALLIITIVVPGLVLAVAVTVL). Topologically, residues 606–793 (CIYLDLPWYL…KLMEKAAEIH (188 aa)) are cytoplasmic. The TIR domain maps to 640–781 (LQFHAFISYS…LFWANLRASI (142 aa)).

This sequence belongs to the Toll-like receptor family. In terms of assembly, homodimer (via cytoplasmic TIR domain). Heterodimer with TLR2 via their respective extracellular domains. Binds MYD88 via their respective TIR domains. Interacts with CD36, following CD36 stimulation by oxLDL or amyloid-beta 42, and forms a heterodimer with TLR4. The trimeric complex is internalized and triggers inflammatory response. LYN kinase activity facilitates TLR4-TLR6 heterodimerization and signal initiation. The heterodimer TLR2:TLR6 interacts with CD14 and CD36 in response to triacylated lipopeptides. Highest expression levels seen in blood and lymph node, intermediate expression seen in spleen and lowest expression seen in the liver, lung and udder cistern.

It is found in the cell membrane. Its subcellular location is the cytoplasmic vesicle. The protein localises to the phagosome membrane. It localises to the membrane raft. The protein resides in the golgi apparatus. Functionally, participates in the innate immune response to Gram-positive bacteria and fungi. Specifically recognizes diacylated and, to a lesser extent, triacylated lipopeptides. In response to diacylated lipopeptides, forms the activation cluster TLR2:TLR6:CD14:CD36, this cluster triggers signaling from the cell surface and subsequently is targeted to the Golgi in a lipid-raft dependent pathway. Acts via MYD88 and TRAF6, leading to NF-kappa-B activation, cytokine secretion and the inflammatory response. Recognizes mycoplasmal macrophage-activating lipopeptide-2kD (MALP-2), soluble tuberculosis factor (STF), phenol-soluble modulin (PSM) and B.burgdorferi outer surface protein A lipoprotein (OspA-L) cooperatively with TLR2. In complex with TLR4, promotes sterile inflammation in monocytes/macrophages in response to oxidized low-density lipoprotein (oxLDL) or amyloid-beta 42. In this context, the initial signal is provided by oxLDL- or amyloid-beta 42-binding to CD36. This event induces the formation of a heterodimer of TLR4 and TLR6, which is rapidly internalized and triggers inflammatory response, leading to the NF-kappa-B-dependent production of CXCL1, CXCL2 and CCL9 cytokines, via MYD88 signaling pathway, and CCL5 cytokine, via TICAM1 signaling pathway, as well as IL1B secretion. This is Toll-like receptor 6 from Bos taurus (Bovine).